A 416-amino-acid polypeptide reads, in one-letter code: CinA-like protein (416 aa).

Belongs to the CinA family.

This chain is CinA-like protein, found in Nostoc punctiforme (strain ATCC 29133 / PCC 73102).